We begin with the raw amino-acid sequence, 1081 residues long: DNA-directed RNA polymerase subunit beta (1081 aa).

This sequence belongs to the RNA polymerase beta chain family. In terms of assembly, in plastids the minimal PEP RNA polymerase catalytic core is composed of four subunits: alpha, beta, beta', and beta''. When a (nuclear-encoded) sigma factor is associated with the core the holoenzyme is formed, which can initiate transcription.

Its subcellular location is the plastid. It localises to the chloroplast. The enzyme catalyses RNA(n) + a ribonucleoside 5'-triphosphate = RNA(n+1) + diphosphate. In terms of biological role, DNA-dependent RNA polymerase catalyzes the transcription of DNA into RNA using the four ribonucleoside triphosphates as substrates. This is DNA-directed RNA polymerase subunit beta from Cyanidium caldarium (Red alga).